The chain runs to 945 residues: Sensor kinase CckA (945 aa).

A run of 2 helical transmembrane segments spans residues Ala111 to Phe131 and Phe139 to Ala159. 3 consecutive PAS domains span residues His171–Asp212, Leu313–Gly341, and Ala432–Gln505. The Histidine kinase domain maps to Gly574–Ile797. His577 carries the phosphohistidine; by autocatalysis modification. One can recognise a Response regulatory domain in the interval Thr825 to Leu941. A 4-aspartylphosphate modification is found at Asp876.

The protein localises to the cell inner membrane. It catalyses the reaction ATP + protein L-histidine = ADP + protein N-phospho-L-histidine.. Component of a regulatory phosphorelay system that controls B.abortus cell growth, division, and intracellular survival inside mammalian host cells. This signaling pathway is composed of CckA, ChpT, CtrA and CpdR. CckA autophosphorylates in the presence of ATP on a conserved His residue and transfers a phosphoryl group to a conserved Asp residue on its C-terminal receiver domain. CckA-P transfers phosphoryl groups to the ChpT phosphotransferase. This is Sensor kinase CckA from Brucella abortus (strain 2308).